We begin with the raw amino-acid sequence, 397 residues long: Na(+)/H(+) antiporter NhaA 1 (397 aa).

Helical transmembrane passes span 15 to 35, 42 to 62, 65 to 85, 101 to 121, 129 to 149, 160 to 180, 183 to 203, 219 to 241, 265 to 285, 299 to 319, 335 to 355, and 370 to 390; these read FQLE…ALII, YLYG…LNIA, LLLW…GLEV, ILPA…YWFI, VAGW…VLAL, LFLM…IALF, GTLS…LVAM, LILW…ALAF, WVAY…SLAG, ITIG…WVAV, ILGV…VGSL, and MGIL…TAMA.

Belongs to the NhaA Na(+)/H(+) (TC 2.A.33) antiporter family.

It localises to the cell inner membrane. The enzyme catalyses Na(+)(in) + 2 H(+)(out) = Na(+)(out) + 2 H(+)(in). Its function is as follows. Na(+)/H(+) antiporter that extrudes sodium in exchange for external protons. The protein is Na(+)/H(+) antiporter NhaA 1 of Pseudomonas putida (strain ATCC 47054 / DSM 6125 / CFBP 8728 / NCIMB 11950 / KT2440).